A 713-amino-acid chain; its full sequence is MKTEISTADSLRDPPSNGLKADSELVIREDIDQFLPSEVSSLGSDHQNDGEDSDTDSDNFLQDPEDDVDEESTGRGTVTTTSTSTESRGRPSSCIFVASLAAALSDDELCLSVTENFKKYGDLARVKVLRDNANRPYAFVQYNNDHDAKHALIRAQGTLLNGRRLRCEPAKVNRTLYLKNQQSIDFNEISQICEKFGGLEQIVPDRTDNQYTRRYTYPISSANSWFVQFVYRDDAIRAYANLRTDPNWIIEWAQNINVPKNYNLLHKSKFKSSKYHQNNGIINNDGSNNNDNNNSNNNNREDSRRNGDVIEEECGHVHGSDSEEKLTSDGIYDDEDKDSEITIDKRSIFVGQLDKETTREELNRRFSTHGKIQDINLIFKPTNIFAFIKYETEEAAAAALESENHAIFLNKTMHVQYKEVGGRHNRKFSGKNGGSNFNHHQFFSTRSGKTFTGPELNLAPPPINMYRKMSGGSQQESETMMPYMPMGPMPMGPPPPNAASLSDFDMFPPSYSTFMKGMMPLRRKSMPNSWSSPSSKSVNSENESVNGGDENSELPSEIPESSGRYNAANSFTTYNNSSAGNSNNNNNNNNSNSNKSQYKKRYARRSSYGYNEVPPKPYYFQPYYYHPMQYHMGPMGPLHPSQGSAGNHHPYMMVYPMSPPPPSGLDGSMIPPPINVSQSHAANHGSTHVHANEFISNDTGDINEDNKAYSLDY.

The interval 1–90 (MKTEISTADS…TSTSTESRGR (90 aa)) is disordered. Residues 21-31 (ADSELVIREDI) show a composition bias toward basic and acidic residues. Residues 50-71 (GEDSDTDSDNFLQDPEDDVDEE) are compositionally biased toward acidic residues. The span at 74–90 (GRGTVTTTSTSTESRGR) shows a compositional bias: low complexity. An RRM 1 domain is found at 93 to 172 (SCIFVASLAA…RRLRCEPAKV (80 aa)). The disordered stretch occupies residues 276-337 (HQNNGIINND…SDGIYDDEDK (62 aa)). The segment covering 278 to 298 (NNGIINNDGSNNNDNNNSNNN) has biased composition (low complexity). Residues 299–327 (NREDSRRNGDVIEEECGHVHGSDSEEKLT) are compositionally biased toward basic and acidic residues. Residues 346-420 (RSIFVGQLDK…KTMHVQYKEV (75 aa)) form the RRM 2 domain. The segment at 524-609 (KSMPNSWSSP…KRYARRSSYG (86 aa)) is disordered. Phosphoserine is present on Ser525. A compositionally biased stretch (low complexity) spans 526-546 (MPNSWSSPSSKSVNSENESVN). Residues 563-574 (GRYNAANSFTTY) are compositionally biased toward polar residues. The segment covering 575-594 (NNSSAGNSNNNNNNNNSNSN) has biased composition (low complexity).

Post-translationally, polyubiquitinated by RSP5.

In terms of biological role, positive regulator of sporulation-specific genes and of sporulation. Required for premeiotic DNA synthesis and meiotic chromosomal segregation. May act in a nutritional signaling pathway. This is Meiotic activator RIM4 (RIM4) from Saccharomyces cerevisiae (strain ATCC 204508 / S288c) (Baker's yeast).